The sequence spans 509 residues: DEAD-box ATP-dependent RNA helicase CshA (509 aa).

The Q motif motif lies at 2 to 30; that stretch reads QNFKELGISDKTVQTLEAMGFKEPTPIQK. The 171-residue stretch at 33 to 203 folds into the Helicase ATP-binding domain; the sequence is IPYALEGDDI…QQFMKAPKII (171 aa). 46-53 provides a ligand contact to ATP; it reads AQTGTGKT. The DEAD box signature appears at 150–153; the sequence is DEAD. Residues 214-375 enclose the Helicase C-terminal domain; sequence QIDEYYTIVK…LRPPHRKEVL (162 aa). 2 stretches are compositionally biased toward basic residues: residues 440–459 and 467–482; these read ARKN…KRGN and RRSK…KKNQ. A disordered region spans residues 440 to 509; sequence ARKNRSSKGG…KGRTFADHQK (70 aa). The segment covering 483–492 has biased composition (basic and acidic residues); it reads KKFDRRDKQQ.

It belongs to the DEAD box helicase family. CshA subfamily. Oligomerizes, may be a member of the RNA degradosome.

The protein localises to the cytoplasm. The catalysed reaction is ATP + H2O = ADP + phosphate + H(+). Functionally, DEAD-box RNA helicase possibly involved in RNA degradation. Unwinds dsRNA in both 5'- and 3'-directions, has RNA-dependent ATPase activity. This Staphylococcus epidermidis (strain ATCC 12228 / FDA PCI 1200) protein is DEAD-box ATP-dependent RNA helicase CshA.